We begin with the raw amino-acid sequence, 270 residues long: ParA family protein MPN_688 (270 aa).

Belongs to the ParA family.

This Mycoplasma pneumoniae (strain ATCC 29342 / M129 / Subtype 1) (Mycoplasmoides pneumoniae) protein is ParA family protein MPN_688.